We begin with the raw amino-acid sequence, 444 residues long: Na(+)-translocating NADH-quinone reductase subunit A (444 aa).

This sequence belongs to the NqrA family. In terms of assembly, composed of six subunits; NqrA, NqrB, NqrC, NqrD, NqrE and NqrF.

It catalyses the reaction a ubiquinone + n Na(+)(in) + NADH + H(+) = a ubiquinol + n Na(+)(out) + NAD(+). In terms of biological role, NQR complex catalyzes the reduction of ubiquinone-1 to ubiquinol by two successive reactions, coupled with the transport of Na(+) ions from the cytoplasm to the periplasm. NqrA to NqrE are probably involved in the second step, the conversion of ubisemiquinone to ubiquinol. In Shewanella frigidimarina (strain NCIMB 400), this protein is Na(+)-translocating NADH-quinone reductase subunit A.